The sequence spans 277 residues: Phosphoenolpyruvate synthase regulatory protein (277 aa).

157-164 contacts ADP; it reads GVSRCGKT.

Belongs to the pyruvate, phosphate/water dikinase regulatory protein family. PSRP subfamily.

It catalyses the reaction [pyruvate, water dikinase] + ADP = [pyruvate, water dikinase]-phosphate + AMP + H(+). The enzyme catalyses [pyruvate, water dikinase]-phosphate + phosphate + H(+) = [pyruvate, water dikinase] + diphosphate. Functionally, bifunctional serine/threonine kinase and phosphorylase involved in the regulation of the phosphoenolpyruvate synthase (PEPS) by catalyzing its phosphorylation/dephosphorylation. This Escherichia coli O17:K52:H18 (strain UMN026 / ExPEC) protein is Phosphoenolpyruvate synthase regulatory protein.